Reading from the N-terminus, the 567-residue chain is Low-affinity glucose transporter (567 aa).

The span at 1 to 24 (MSNQMTDSTSAGSGTEHSVDTNTA) shows a compositional bias: polar residues. Residues 1 to 36 (MSNQMTDSTSAGSGTEHSVDTNTALKAGSPNDLKVS) are disordered. The Cytoplasmic segment spans residues 18 to 62 (SVDTNTALKAGSPNDLKVSHEEDLNDLEKTAEETLQQKPAKEYIF). Residues 63–83 (VSLCCVMVAFGGFVFGWDTGT) form a helical membrane-spanning segment. Residues 84–113 (ISGFVNQTDFLRRFGQEKADGSHYLSNVRT) lie on the Extracellular side of the membrane. N-linked (GlcNAc...) asparagine glycosylation occurs at Asn89. The chain crosses the membrane as a helical span at residues 114–134 (GLIVSIFNIGCAVGGIVLSNI). Residues 135–141 (GDRWGRR) are Cytoplasmic-facing. A helical transmembrane segment spans residues 142–162 (IGLITVIIIYVIGIIIQIASV). Residues 163–167 (DKWYQ) lie on the Extracellular side of the membrane. The chain crosses the membrane as a helical span at residues 168-188 (YFIGRIISGLGVGGITVLSPM). Residues 189 to 199 (LISETAPKHLR) are Cytoplasmic-facing. Residues 200-220 (GTLVSCYQLMITFGIFLGYCT) form a helical membrane-spanning segment. Residues 221-234 (NYGTKNYSNSVQWR) lie on the Extracellular side of the membrane. The chain crosses the membrane as a helical span at residues 235–255 (VPLGLCFAWAIFMVLGMMFVP). Over 256–334 (ESARFLVETD…MGIMIQSLQQ (79 aa)) the chain is Cytoplasmic. A helical transmembrane segment spans residues 335-354 (LTGDNYFFYYGTTIFQSVGM). The Extracellular segment spans residues 355–358 (DDSF). Residues 359–379 (ETSIVLGIVNFASTFFALYTV) form a helical membrane-spanning segment. The Cytoplasmic segment spans residues 380 to 386 (DHFGRRN). Residues 387 to 407 (CLLYGCVGMVACYVVYASVGV) traverse the membrane as a helical segment. Residues 408–429 (TRLWPDGPDHPDISSKGAGNCM) are Extracellular-facing. A helical transmembrane segment spans residues 430–450 (IVFACFYIFCFATTWAPIAYV). The Cytoplasmic portion of the chain corresponds to 451 to 466 (VISESYPLRVKGKAMA). Residues 467–487 (IASASNWIWGFLIGFFTPFIT) form a helical membrane-spanning segment. Topologically, residues 488–493 (SAIHFY) are extracellular. Residues 494 to 514 (YGYVFMGCMVFAFFYVYFFVP) traverse the membrane as a helical segment. The Cytoplasmic portion of the chain corresponds to 515 to 567 (ETKGLTLEEVNEMYSEGVLPWKSSSWVPSSRRGAEYDVDALQHDDKPWYKAML).

The protein belongs to the major facilitator superfamily. Sugar transporter (TC 2.A.1.1) family.

The protein localises to the membrane. Functionally, low-affinity glucose transporter. The protein is Low-affinity glucose transporter (RAG1) of Kluyveromyces lactis (strain ATCC 8585 / CBS 2359 / DSM 70799 / NBRC 1267 / NRRL Y-1140 / WM37) (Yeast).